Consider the following 434-residue polypeptide: Glutamyl-tRNA reductase (434 aa).

Residues 49–52, Ser107, 112–114, and Gln118 contribute to the substrate site; these read TCNR and EPQ. Cys50 (nucleophile) is an active-site residue. 187–192 serves as a coordination point for NADP(+); sequence GAGETV.

The protein belongs to the glutamyl-tRNA reductase family. In terms of assembly, homodimer.

The enzyme catalyses (S)-4-amino-5-oxopentanoate + tRNA(Glu) + NADP(+) = L-glutamyl-tRNA(Glu) + NADPH + H(+). The protein operates within porphyrin-containing compound metabolism; protoporphyrin-IX biosynthesis; 5-aminolevulinate from L-glutamyl-tRNA(Glu): step 1/2. In terms of biological role, catalyzes the NADPH-dependent reduction of glutamyl-tRNA(Glu) to glutamate 1-semialdehyde (GSA). The sequence is that of Glutamyl-tRNA reductase from Hydrogenovibrio crunogenus (strain DSM 25203 / XCL-2) (Thiomicrospira crunogena).